Here is a 106-residue protein sequence, read N- to C-terminus: uncharacterized protein (106 aa).

The N-terminal stretch at 1 to 27 (MHHFVPSISLFMASVSFSVFFSHLATS) is a signal peptide. A helical membrane pass occupies residues 42-62 (TLFSMVPLINSSFNLSVFLFF).

Its subcellular location is the membrane. This is an uncharacterized protein from Saccharomyces cerevisiae (strain ATCC 204508 / S288c) (Baker's yeast).